Consider the following 666-residue polypeptide: Chaperone protein HtpG (666 aa).

Residues 1 to 374 (MSELNPVDNQ…SADLPLNVSR (374 aa)) form an a; substrate-binding region. The b stretch occupies residues 375–593 (ELLQESRDVK…EGELSPQMIQ (219 aa)). The interval 594 to 666 (MLKQMGQDVP…LRRVNELLMR (73 aa)) is c.

This sequence belongs to the heat shock protein 90 family. Homodimer.

Its subcellular location is the cytoplasm. Functionally, molecular chaperone. Has ATPase activity. This chain is Chaperone protein HtpG, found in Psychrobacter cryohalolentis (strain ATCC BAA-1226 / DSM 17306 / VKM B-2378 / K5).